Here is a 245-residue protein sequence, read N- to C-terminus: MTKKIIIKIGGSAAEQLTPAFFDTIKYWQTQDTQIAIVHGGGDRISQLMSQLHEPIEKINGIRLTTQTGINITKMALLGQVQPALIEACRQQGIATIGLNAGSNQLLTGHLLDSDTYGYVGAIHQVNTQLIHQLWQQKLIPIIAPLAITNDGQWLNVNADHAATAIAKYLKADELYLLTDVSGVAVSGNILQELTPGKAKQLQDDHIITGGMIPKINSALHAVKRGVHNVHITDTVTHPGTIVTL.

Substrate-binding positions include 41-42, arginine 63, and asparagine 156; that span reads GG.

Belongs to the acetylglutamate kinase family. ArgB subfamily.

The protein localises to the cytoplasm. It catalyses the reaction N-acetyl-L-glutamate + ATP = N-acetyl-L-glutamyl 5-phosphate + ADP. The protein operates within amino-acid biosynthesis; L-arginine biosynthesis; N(2)-acetyl-L-ornithine from L-glutamate: step 2/4. In terms of biological role, catalyzes the ATP-dependent phosphorylation of N-acetyl-L-glutamate. In Leuconostoc citreum (strain KM20), this protein is Acetylglutamate kinase.